The primary structure comprises 121 residues: Small ribosomal subunit protein bS16 (121 aa).

Positions 85–110 (REARNNPKKAEPGKKAQERAAERAAK) are enriched in basic and acidic residues. The tract at residues 85-121 (REARNNPKKAEPGKKAQERAAERAAKAAEASEAASAE) is disordered. Low complexity predominate over residues 111–121 (AAEASEAASAE).

This sequence belongs to the bacterial ribosomal protein bS16 family.

This is Small ribosomal subunit protein bS16 from Azorhizobium caulinodans (strain ATCC 43989 / DSM 5975 / JCM 20966 / LMG 6465 / NBRC 14845 / NCIMB 13405 / ORS 571).